The sequence spans 835 residues: Microcephalin (835 aa).

Positions 1 to 93 (MAAPILKDVV…AHIDESLFPA (93 aa)) constitute a BRCT 1 domain. Phosphoserine occurs at positions 279, 287, 296, and 333. Disordered stretches follow at residues 313 to 381 (PDQK…RRSI) and 419 to 443 (DNLK…AQLS). At threonine 335 the chain carries Phosphothreonine. Basic residues predominate over residues 343 to 361 (LLIHSRPRSSSVKRKRVSH). A compositionally biased stretch (polar residues) spans 434 to 443 (QLPSSPAQLS). Phosphoserine is present on serine 548. The segment at 555 to 584 (AVGLKSTQNKGTTSKISNSSEGEAQSEHEP) is disordered. Over residues 559 to 577 (KSTQNKGTTSKISNSSEGE) the composition is skewed to polar residues. 2 consecutive BRCT domains span residues 640-730 (SGRG…PFEL) and 751-833 (YRGT…NYLL).

As to quaternary structure, interacts with CDC27 and maybe other components of the APC/C complex. Interacts with histone variant H2AX under DNA damage conditions. As to expression, expressed in fetal brain, liver and kidney.

The protein resides in the cytoplasm. It localises to the cytoskeleton. Its subcellular location is the microtubule organizing center. The protein localises to the centrosome. Implicated in chromosome condensation and DNA damage induced cellular responses. May play a role in neurogenesis and regulation of the size of the cerebral cortex. The sequence is that of Microcephalin from Homo sapiens (Human).